Here is a 579-residue protein sequence, read N- to C-terminus: Copine-E (579 aa).

C2 domains lie at 45–175 (IDPS…KVIG) and 183–304 (QTGT…EFTL). Ca(2+) is bound by residues aspartate 80, aspartate 86, aspartate 145, aspartate 147, and aspartate 153. The VWFA domain occupies 345-552 (NLMIAIDCTA…KKYENDPEQL (208 aa)).

Belongs to the copine family. It depends on Ca(2+) as a cofactor.

In Dictyostelium discoideum (Social amoeba), this protein is Copine-E (cpnE).